Reading from the N-terminus, the 231-residue chain is NAD(+) ADP-ribosyltransferase (231 aa).

It catalyses the reaction NAD(+) + (ADP-D-ribosyl)n-acceptor = nicotinamide + (ADP-D-ribosyl)n+1-acceptor + H(+).. With respect to regulation, activity increases up to 5-6 times with Mg(2+) at 50 uM or higher ion concentration. 3-aminobenzamide (3-ABA) inhibits the activity by up to half and nicotinamide to a lesser extent. Zn(2+) inhibits the activity to half-maximal rate but at 500 uM concentration of the ion. Functionally, catalyzes auto- and hetero-ADP ribosylation and produces short oligomers by elongating the ADP-ribose chain (up to 6-mer). Binds DNA non-specifically but with high affinity. Forms very stable complexes with circular DNA wherein the circular DNA confers thermostability compared to linear DNA. The chain is NAD(+) ADP-ribosyltransferase from Saccharolobus solfataricus (Sulfolobus solfataricus).